We begin with the raw amino-acid sequence, 427 residues long: Adenylosuccinate synthetase (427 aa).

GTP-binding positions include 12-18 (GDEGKGK) and 40-42 (GHT). The active-site Proton acceptor is the Asp13. Asp13 and Gly40 together coordinate Mg(2+). IMP contacts are provided by residues 13 to 16 (DEGK), 38 to 41 (NAGH), Thr130, Arg144, Gln224, Thr239, and Arg303. Residue His41 is the Proton donor of the active site. 299-305 (VTTGRAR) lines the substrate pocket. Residues Arg305, 331–333 (KID), and 413–415 (SVG) contribute to the GTP site.

Belongs to the adenylosuccinate synthetase family. In terms of assembly, homodimer. The cofactor is Mg(2+).

The protein localises to the cytoplasm. The enzyme catalyses IMP + L-aspartate + GTP = N(6)-(1,2-dicarboxyethyl)-AMP + GDP + phosphate + 2 H(+). It participates in purine metabolism; AMP biosynthesis via de novo pathway; AMP from IMP: step 1/2. In terms of biological role, plays an important role in the de novo pathway of purine nucleotide biosynthesis. Catalyzes the first committed step in the biosynthesis of AMP from IMP. In Clostridium novyi (strain NT), this protein is Adenylosuccinate synthetase.